The following is a 186-amino-acid chain: ADP-ribosylation factor-like protein 8A (186 aa).

The note=Mediates targeting to membranes intramembrane region spans Met-1 to Glu-19. GTP is bound by residues Gln-29–Thr-35, Asp-71–Gln-75, and Asn-130–Asp-133.

The protein belongs to the small GTPase superfamily. Arf family.

Its subcellular location is the late endosome membrane. The protein resides in the lysosome membrane. Its function is as follows. May play a role in lysosomes motility. Alternatively, may play a role in chromosome segregation. The protein is ADP-ribosylation factor-like protein 8A (arl8a) of Xenopus tropicalis (Western clawed frog).